We begin with the raw amino-acid sequence, 39 residues long: Photosystem II reaction center protein L (39 aa).

Residues 18-38 traverse the membrane as a helical segment; that stretch reads SLYLGLLSVLVLGILFSSYFF.

The protein belongs to the PsbL family. As to quaternary structure, PSII is composed of 1 copy each of membrane proteins PsbA, PsbB, PsbC, PsbD, PsbE, PsbF, PsbH, PsbI, PsbJ, PsbK, PsbL, PsbM, PsbT, PsbX, PsbY, Psb30/Ycf12, peripheral proteins PsbO, CyanoQ (PsbQ), PsbU, PsbV and a large number of cofactors. It forms dimeric complexes.

It localises to the cellular thylakoid membrane. Functionally, one of the components of the core complex of photosystem II (PSII). PSII is a light-driven water:plastoquinone oxidoreductase that uses light energy to abstract electrons from H(2)O, generating O(2) and a proton gradient subsequently used for ATP formation. It consists of a core antenna complex that captures photons, and an electron transfer chain that converts photonic excitation into a charge separation. This subunit is found at the monomer-monomer interface and is required for correct PSII assembly and/or dimerization. The protein is Photosystem II reaction center protein L of Prochlorococcus marinus subsp. pastoris (strain CCMP1986 / NIES-2087 / MED4).